The primary structure comprises 359 residues: Protein disulfide-isomerase C17H9.14c (359 aa).

The N-terminal stretch at 1–19 (MRLPLLSFVIFALFALVFA) is a signal peptide. 2 consecutive Thioredoxin domains span residues 20 to 130 (SGVV…EKTG) and 134 to 250 (RKIV…KKSG). Catalysis depends on nucleophile residues cysteine 51 and cysteine 54. 2 cysteine pairs are disulfide-bonded: cysteine 51–cysteine 54 and cysteine 170–cysteine 173.

Belongs to the protein disulfide isomerase family.

It catalyses the reaction Catalyzes the rearrangement of -S-S- bonds in proteins.. Its function is as follows. Participates in the folding of proteins containing disulfide bonds, may be involved in glycosylation, prolyl hydroxylation and triglyceride transfer. This Schizosaccharomyces pombe (strain 972 / ATCC 24843) (Fission yeast) protein is Protein disulfide-isomerase C17H9.14c.